The chain runs to 112 residues: LXAINDMDVAXNLMKVLNAVMRDPSLYRMXSLEAAMLNSFYATSYKPTFIDDXIMEQMMAFIDDDPLEQMRAERVVMYXTQPFIDAVVMYHNQLFIDAKSXLDSTRSYXXGG.

In terms of assembly, binds annexin.

The sequence is that of 87 kDa annexin-binding protein from Physarum polycephalum (Slime mold).